The sequence spans 229 residues: MAKKKAFIPFFYFTSIVFLPWVISLCCNKSLKIWITNWWNTRQCETFLNDIKEKSVLEKFIQLENLFQLDEMIKEYPETDLQQFRLGIHKETIQFIKIHNEYHIHTILHFSTNLISFVILSGYSFWGKEKLFILNSWVQEFLYNLSDTIKAFSILLLTDLCIGFHSPHGWELMIGYIYKDFGFAHYEQILSGLVSTFPVILDTIFKYWIFRYLNRVSPSLVVIYHAIND.

The next 3 membrane-spanning stretches (helical) occupy residues 6-26 (AFIP…ISLC), 107-127 (ILHF…SFWG), and 189-209 (ILSG…KYWI).

The protein belongs to the CemA family.

The protein resides in the plastid. The protein localises to the chloroplast inner membrane. The catalysed reaction is K(+)(in) + H(+)(out) = K(+)(out) + H(+)(in). In terms of biological role, contributes to K(+)/H(+) antiport activity by supporting proton efflux to control proton extrusion and homeostasis in chloroplasts in a light-dependent manner to modulate photosynthesis. Prevents excessive induction of non-photochemical quenching (NPQ) under continuous-light conditions. Indirectly promotes efficient inorganic carbon uptake into chloroplasts. This chain is Potassium/proton antiporter CemA, found in Draba nemorosa (Woodland whitlowgrass).